A 256-amino-acid chain; its full sequence is Small ribosomal subunit protein eS1 (256 aa).

The residue at position 2 (Ala2) is an N-acetylalanine; partial.

It belongs to the eukaryotic ribosomal protein eS1 family. Component of the small ribosomal subunit. Mature ribosomes consist of a small (40S) and a large (60S) subunit. The 40S subunit contains about 33 different proteins and 1 molecule of RNA (18S). The 60S subunit contains about 49 different proteins and 3 molecules of RNA (25S, 5.8S and 5S).

The protein localises to the cytoplasm. The polypeptide is Small ribosomal subunit protein eS1 (Meyerozyma guilliermondii (strain ATCC 6260 / CBS 566 / DSM 6381 / JCM 1539 / NBRC 10279 / NRRL Y-324) (Yeast)).